A 513-amino-acid chain; its full sequence is MNKKPVMLMILDGFGITNHEDGNAVKMANKPNFDKLLREYPHTQLKASGLNVGLPEGQMGNSEVGHLNIGSGRVIYQELTRITKDINDGVFFENTEINYAIDEAIKNNSSLHLLGLLSDGGVHSHIDHLKAILKLAKDKGLNRVYVHAFLDGRDVPPSSAKEYIINIENYMKELSVGQIATLAGRYYAMDRDKRWERVELAYNALVYGTGELSNSAVEAIEKSYKDNTTDEFVLPTVILKDGKPTGTIKDEDSIIFFNFRPDRARQITRALNDKDFDGFERKRLKLNFITMTQYDKTIENVRIAYKPQSYKNTLGEYVSSLGLNQLRIAETEKYAHVTFFFNGGVETPNKGEDRALIPSPKVATYDLKPEMSAFEVKDEVINRIESNKYDMIILNFANPDMVGHTGVFDAAKTAIEVVDKCVGEISDKILEKEGTVFITADHGNSEQMIDYSTGKPMTAHTTNEVPFVYVSKDAKDKRLKSEGILADIAPTMLTEMGVKIPEEMTGRNLIEGK.

2 residues coordinate Mn(2+): aspartate 12 and serine 62. Serine 62 (phosphoserine intermediate) is an active-site residue. Residues histidine 123, 153–154, arginine 185, arginine 191, 260–263, and lysine 333 contribute to the substrate site; these read RD and RPDR. Mn(2+)-binding residues include aspartate 400, histidine 404, aspartate 441, histidine 442, and histidine 460.

It belongs to the BPG-independent phosphoglycerate mutase family. In terms of assembly, monomer. Mn(2+) is required as a cofactor.

It carries out the reaction (2R)-2-phosphoglycerate = (2R)-3-phosphoglycerate. It participates in carbohydrate degradation; glycolysis; pyruvate from D-glyceraldehyde 3-phosphate: step 3/5. Functionally, catalyzes the interconversion of 2-phosphoglycerate and 3-phosphoglycerate. The sequence is that of 2,3-bisphosphoglycerate-independent phosphoglycerate mutase from Clostridium tetani (strain Massachusetts / E88).